Consider the following 1282-residue polypeptide: Crescerin-like protein che-12 (1282 aa).

2 TOG regions span residues 33-240 (DFDT…EHTE) and 268-515 (PSLV…MDSF). 8 HEAT repeats span residues 59–96 (QKKG…TFGS), 100–137 (YCMC…LKPE), 162–209 (ELHH…FIGN), 261–300 (RLRF…QITP), 308–345 (PHLH…HLKG), 349–386 (AHIQ…NINP), 388–421 (TVGG…TISP), and 424–461 (FNLQ…LLNG). The interval 566–714 (IQQQGQAEKP…RSFDDRPAKA (149 aa)) is disordered. Composition is skewed to low complexity over residues 575–592 (PSFS…HQAQ) and 633–644 (SAASNPNSSTSS). Residues 702-712 (DPPRSFDDRPA) are compositionally biased toward basic and acidic residues. 2 TOG regions span residues 800–1022 (NMSV…ANVE) and 1066–1282 (TELL…ALIR). 7 HEAT repeats span residues 838 to 875 (DNLK…NLNS), 879 to 917 (SEME…AATA), 919 to 953 (KALQ…IQGS), 961 to 998 (NALS…DPNF), 1095 to 1132 (ASDT…SMAK), 1177 to 1214 (IEPV…LAYK), and 1219 to 1258 (QVEV…LIGE).

The protein belongs to the Crescerin family. As to expression, detected in a subset of amphid neurons that lack wing- or finger-like ciliary extensions. Likewise, detected in phasmid neurons.

The protein localises to the cell projection. The protein resides in the cilium. It localises to the perikaryon. It is found in the dendrite. In terms of biological role, required for normal structure and function of sensory cilia on amphid neurons, especially for the formation of distal ciliary structures, but is less important for normal assembly of middle and basal ciliary structures. Plays a role in the organization of axoneme microtubule bundles in sensory cilia. Required for normal structure and function of the ASER neuron that mediates attraction to NaCl. Required for normal chemotaxis to NaCl. Required for normal avoidance response to high osmolarity. In contrast, is not required for normal chemotaxis to isoamyl alcohol. Does not play a role in intraflagella transport (IFT). Promotes dauer formation in response to pheromones such as the ascarosides ascr#2, ascr#3, ascr#5, ascr#8 and icas#9. This chain is Crescerin-like protein che-12, found in Caenorhabditis elegans.